A 479-amino-acid chain; its full sequence is Beta-amyrin 28-monooxygenase (479 aa).

Residues 5 to 25 (FYLSLLLLFVTFISLSLFFIF) form a helical membrane-spanning segment. Residue Cys-426 coordinates heme.

Belongs to the cytochrome P450 family. Requires heme as cofactor. Expressed in roots, nodules and flowers.

It is found in the membrane. The catalysed reaction is beta-amyrin + 3 reduced [NADPH--hemoprotein reductase] + 3 O2 = oleanolate + 3 oxidized [NADPH--hemoprotein reductase] + 4 H2O + 4 H(+). Its function is as follows. Catalyzes the carboxylation of beta-amyrin at the C-28 position to form oleanolic acid. Involved in an early step in the hemolytic saponin biosynthetic pathway. Catalyzes the carboxylation of alpha-amyrin and lupeol at the C-28 position to form ursolic acid and betulinic acid respectively. The chain is Beta-amyrin 28-monooxygenase from Medicago truncatula (Barrel medic).